A 71-amino-acid chain; its full sequence is ATP synthase subunit c (71 aa).

The next 2 helical transmembrane spans lie at 4-24 (AVIGAGIAVLTGLGAGIGIGI) and 48-68 (IIGAGLAEATAIYGLIIAFMI).

The protein belongs to the ATPase C chain family. F-type ATPases have 2 components, F(1) - the catalytic core - and F(0) - the membrane proton channel. F(1) has five subunits: alpha(3), beta(3), gamma(1), delta(1), epsilon(1). F(0) has three main subunits: a(1), b(2) and c(10-14). The alpha and beta chains form an alternating ring which encloses part of the gamma chain. F(1) is attached to F(0) by a central stalk formed by the gamma and epsilon chains, while a peripheral stalk is formed by the delta and b chains.

It is found in the cell membrane. In terms of biological role, f(1)F(0) ATP synthase produces ATP from ADP in the presence of a proton or sodium gradient. F-type ATPases consist of two structural domains, F(1) containing the extramembraneous catalytic core and F(0) containing the membrane proton channel, linked together by a central stalk and a peripheral stalk. During catalysis, ATP synthesis in the catalytic domain of F(1) is coupled via a rotary mechanism of the central stalk subunits to proton translocation. Key component of the F(0) channel; it plays a direct role in translocation across the membrane. A homomeric c-ring of between 10-14 subunits forms the central stalk rotor element with the F(1) delta and epsilon subunits. The sequence is that of ATP synthase subunit c from Clostridium botulinum (strain Alaska E43 / Type E3).